An 856-amino-acid polypeptide reads, in one-letter code: Phospholipase D gamma 2 (856 aa).

The C2 domain occupies P21–F161. D223 contributes to the Ca(2+) binding site. In terms of domain architecture, PLD phosphodiesterase 1 spans T362–R397. Catalysis depends on residues H367, K369, and D374. H367 is an a 1,2-diacyl-sn-glycero-3-phosphate binding site. Residues H403 and H435 each contribute to the Ca(2+) site. Residues Q562 and H707 each contribute to the a 1,2-diacyl-sn-glycero-3-phosphate site. The PLD phosphodiesterase 2 domain occupies F702–S729. Catalysis depends on residues H707, K709, and D714. E770 provides a ligand contact to Ca(2+).

It belongs to the phospholipase D family. C2-PLD subfamily. The cofactor is Ca(2+). Highly expressed in roots and flowers, moderately in stems, leaves and seedlings and low in siliques. Not detected in seeds.

The protein resides in the cytoplasm. The protein localises to the membrane. The catalysed reaction is a 1,2-diacyl-sn-glycero-3-phosphocholine + H2O = a 1,2-diacyl-sn-glycero-3-phosphate + choline + H(+). Inhibited by neomycin. Hydrolyzes glycerol-phospholipids at the terminal phosphodiesteric bond to generate phosphatidic acids (PA). Plays an important role in various cellular processes, including phytohormone action, vesicular trafficking, secretion, cytoskeletal arrangement, meiosis, tumor promotion, pathogenesis, membrane deterioration and senescence. Can use phosphatidylserine but prefers ethanolamine-containing lipids as substrates. Can use phosphatidylcholine (PC) as substrates in the presence of phosphatidylethanolamine (PE) and PIP2. Involved in membrane lipid modulation under aluminum (Al) stress and negatively modulate plant tolerance to Al. The protein is Phospholipase D gamma 2 of Arabidopsis thaliana (Mouse-ear cress).